The following is a 782-amino-acid chain: Fibrinogen alpha chain (782 aa).

Positions 1–19 are cleaved as a signal peptide; sequence MLSLRVACLILSLASTVWT. Residues 68–547 are a coiled coil; it reads GCRMKGLIDE…KRGRARTMRD (480 aa). A compositionally biased stretch (basic and acidic residues) spans 264-283; the sequence is RPGKDGASRGDLPGDSRGDS. Residues 264–374 form a disordered region; sequence RPGKDGASRG…PATRKEYHTG (111 aa). Ser-279 carries the post-translational modification Phosphoserine. Positions 311-323 are enriched in gly residues; sequence SGSGSDGNWGSGT. Low complexity-rich tracts occupy residues 324-344 and 354-364; these read TGSD…SGSG and GEFSEFGGSSS. A Phosphoserine modification is found at Ser-326. An intrachain disulfide couples Cys-404 to Cys-434. The residue at position 470 (Ser-470) is a Phosphoserine. Pro-499 carries the post-translational modification 4-hydroxyproline; by P4HA1. The span at 522–536 shows a compositional bias: basic and acidic residues; sequence DEAASEAHQEGDTRT. The tract at residues 522-542 is disordered; sequence DEAASEAHQEGDTRTTKRGRA. Ser-526 is subject to Phosphoserine. The Fibrinogen C-terminal domain maps to 539–780; sequence RGRARTMRDC…AVRMKIRPLV (242 aa). N-linked (GlcNAc...) asparagine glycosylation occurs at Asn-602. Asp-707, Asp-709, Trp-711, and Glu-713 together coordinate Ca(2+). An intrachain disulfide couples Cys-715 to Cys-728.

In terms of assembly, heterohexamer; disulfide linked. Contains 2 sets of 3 non-identical chains (alpha, beta and gamma). The 2 heterotrimers are in head to head conformation with the N-termini in a small central domain. Conversion of fibrinogen to fibrin is triggered by thrombin, which cleaves fibrinopeptides A and B from alpha and beta chains, and thus exposes the N-terminal polymerization sites responsible for the formation of the soft clot. The soft clot is converted into the hard clot by factor XIIIA which catalyzes the epsilon-(gamma-glutamyl)lysine cross-linking between gamma chains (stronger) and between alpha chains (weaker) of different monomers. Post-translationally, forms F13A-mediated cross-links between a glutamine and the epsilon-amino group of a lysine residue, forming fibronectin-fibrinogen heteropolymers. In terms of processing, phosphorylated by FAM20C in the extracellular medium.

It localises to the secreted. Cleaved by the protease thrombin to yield monomers which, together with fibrinogen beta (FGB) and fibrinogen gamma (FGG), polymerize to form an insoluble fibrin matrix. Fibrin has a major function in hemostasis as one of the primary components of blood clots. In addition, functions during the early stages of wound repair to stabilize the lesion and guide cell migration during re-epithelialization. Was originally thought to be essential for platelet aggregation, based on in vitro studies using anticoagulated blood. However, subsequent studies have shown that it is not absolutely required for thrombus formation in vivo. Enhances expression of SELP in activated platelets via an ITGB3-dependent pathway. Maternal fibrinogen is essential for successful pregnancy. Fibrin deposition is also associated with infection, where it protects against IFNG-mediated hemorrhage. May also facilitate the immune response via both innate and T-cell mediated pathways. In Rattus norvegicus (Rat), this protein is Fibrinogen alpha chain (Fga).